We begin with the raw amino-acid sequence, 341 residues long: UDP-3-O-acylglucosamine N-acyltransferase (341 aa).

Histidine 237 serves as the catalytic Proton acceptor.

This sequence belongs to the transferase hexapeptide repeat family. LpxD subfamily. Homotrimer.

The catalysed reaction is a UDP-3-O-[(3R)-3-hydroxyacyl]-alpha-D-glucosamine + a (3R)-hydroxyacyl-[ACP] = a UDP-2-N,3-O-bis[(3R)-3-hydroxyacyl]-alpha-D-glucosamine + holo-[ACP] + H(+). It participates in bacterial outer membrane biogenesis; LPS lipid A biosynthesis. In terms of biological role, catalyzes the N-acylation of UDP-3-O-acylglucosamine using 3-hydroxyacyl-ACP as the acyl donor. Is involved in the biosynthesis of lipid A, a phosphorylated glycolipid that anchors the lipopolysaccharide to the outer membrane of the cell. The sequence is that of UDP-3-O-acylglucosamine N-acyltransferase from Azoarcus sp. (strain BH72).